We begin with the raw amino-acid sequence, 384 residues long: Galactokinase (384 aa).

34 to 37 (EHTD) is a substrate binding site. Position 123 to 129 (123 to 129 (SSGLSSS)) interacts with ATP. Mg(2+)-binding residues include S129 and E161. Catalysis depends on D173, which acts as the Proton acceptor. Residue Y222 coordinates substrate.

The protein belongs to the GHMP kinase family. GalK subfamily.

Its subcellular location is the cytoplasm. It catalyses the reaction alpha-D-galactose + ATP = alpha-D-galactose 1-phosphate + ADP + H(+). It functions in the pathway carbohydrate metabolism; galactose metabolism. Catalyzes the transfer of the gamma-phosphate of ATP to D-galactose to form alpha-D-galactose-1-phosphate (Gal-1-P). In Actinobacillus pleuropneumoniae serotype 3 (strain JL03), this protein is Galactokinase.